We begin with the raw amino-acid sequence, 172 residues long: Peptide deformylase 1 (172 aa).

Residues cysteine 91 and histidine 133 each contribute to the Fe cation site. The active site involves glutamate 134. Residue histidine 137 coordinates Fe cation.

It belongs to the polypeptide deformylase family. Fe(2+) is required as a cofactor.

It carries out the reaction N-terminal N-formyl-L-methionyl-[peptide] + H2O = N-terminal L-methionyl-[peptide] + formate. Removes the formyl group from the N-terminal Met of newly synthesized proteins. Requires at least a dipeptide for an efficient rate of reaction. N-terminal L-methionine is a prerequisite for activity but the enzyme has broad specificity at other positions. This chain is Peptide deformylase 1, found in Vibrio parahaemolyticus serotype O3:K6 (strain RIMD 2210633).